A 512-amino-acid polypeptide reads, in one-letter code: 2'-5'-oligoadenylate synthase-like protein 1 (512 aa).

2 consecutive Ubiquitin-like domains span residues 351-430 (IQVT…ISPE) and 431-507 (IQVF…EGKA).

It belongs to the 2-5A synthase family. Specifically interacts with the ligand binding domain of the thyroid receptor (TR). TRIP14 does not require the presence of thyroid hormone for its interaction. Binds MBD1.

The protein resides in the nucleus. It is found in the nucleolus. Its subcellular location is the cytoplasm. Does not have 2'-5'-OAS activity, but can bind double-stranded RNA. Displays antiviral activity via an alternative antiviral pathway independent of RNase L. This Rattus norvegicus (Rat) protein is 2'-5'-oligoadenylate synthase-like protein 1 (Oasl).